A 1681-amino-acid chain; its full sequence is Meiosis regulator and mRNA stability factor 1 (1681 aa).

In terms of domain architecture, NYN spans 340–477; it reads IGVFWDIENC…ALLHHAHELI (138 aa). Disordered stretches follow at residues 576–595 and 638–717; these read VNETKNSCVSNEKAKSPKKV and QMQS…DVVF. Positions 638–647 are enriched in polar residues; sequence QMQSKSNKTS. The segment covering 648–658 has biased composition (basic and acidic residues); sequence QQEKDKKRNGD. A compositionally biased stretch (polar residues) spans 659-690; sequence KQGTLSQSSPLCTNQMLQTARNVGTDNTASKS. Residues 692–715 show a composition bias toward basic and acidic residues; sequence QKRDDTTRKSNADSQKEQKNKEDV. Residues 779-858 form the RRM domain; sequence ADIQIGNLDY…KRIQVSLATG (80 aa). HTH OST-type domains lie at 863-937, 991-1067, 1087-1161, 1163-1238, 1247-1321, 1323-1398, 1399-1472, and 1474-1548; these read SLSL…SPMG, SLKT…HNKP, QLIQ…LTHR, QVKR…IPKR, RTKQ…LTEM, RIKA…INRK, SLRS…SVQL, and SLYV…LKND. Positions 1637–1648 are enriched in polar residues; it reads EPSTQNICPQES. Residues 1637–1662 form a disordered region; the sequence is EPSTQNICPQESKSTKELPESPVKRQ. A compositionally biased stretch (basic and acidic residues) spans 1649-1659; sequence KSTKELPESPV.

The protein resides in the peroxisome. Essential regulator of oogenesis required for female meiotic progression to repress transposable elements and preventing their mobilization, which is essential for the germline integrity. This is Meiosis regulator and mRNA stability factor 1 from Xenopus tropicalis (Western clawed frog).